A 668-amino-acid polypeptide reads, in one-letter code: Packaging protein UL32 homolog (668 aa).

Positions 1-10 (MNPSTHVSSN) are enriched in polar residues. Residues 1–35 (MNPSTHVSSNGPTTPPHGPHTTFLPPTSPAPSTSS) form a disordered region. A compositionally biased stretch (low complexity) spans 19-35 (PHTTFLPPTSPAPSTSS). Residues Cys200, Cys203, His276, and Cys282 each coordinate Zn(2+). The interval 200–282 (CNLCAIISIC…FHLHFFINRC (83 aa)) is zinc finger 1. The interval 401–430 (IEEEEDEEGGEKGGDDPGRHNGGGTSGGFS) is disordered. The segment covering 410–419 (GEKGGDDPGR) has biased composition (basic and acidic residues). Positions 459, 462, 567, and 574 each coordinate Zn(2+). Positions 459 to 574 (CLLCELMACS…YKHFFCDPQC (116 aa)) are zinc finger 2.

Belongs to the herpesviridae UL32 protein family.

It localises to the host cytoplasm. The protein localises to the host nucleus. In terms of biological role, plays a role in efficient localization of neo-synthesized capsids to nuclear replication compartments, thereby controlling cleavage and packaging of virus genomic DNA. The sequence is that of Packaging protein UL32 homolog (UL52) from Homo sapiens (Human).